We begin with the raw amino-acid sequence, 640 residues long: MKNVNSKQNNHSTIGEQDIHFFHEGKHIYAYEFMGAHKASEDGIDGIRFTTWAPNAKSICVIGDFNHWQVEDKNHMKRITDAGLWSVFIADVKDGDKYKFVVTNKDTNHYVYKSDPYAFFSELRPNTASVISTQTTYKWHDEKWLKKRATADYYNSPMNTYELHLASWKTKDDRFMTYEEIAEVLPKYVKDMGYTHVEFMPLHEHPLDASWGYQPTGFYSINSRHGDLVGLKHLVDKLHTHDIGVILDWVPGHFCKDQHGLINFDGSACYEYQEPTKAINKGWGTHNFDLGRNEVKCFLISNAMYWINEFHIDGLRVDAVSNILYLNYDREDGQWVPNIHGGHENLEGIAFLRELNGVLKHTCKGVITIAEESSSWPNISTPVEQGGLGFDFKWNMGWMNDTLRYISLDPVYRKYHHNLITFSMVYHYSEKFILSISHDEVVHGKKSLINKMWGDLWNKYAGLRLYMSFMIGHPGKKLIFMGSEFGQFIEWREYEQLQWQVVDEYHTHRETLNFFKKLNEFYKAETALWECDYDHKGFQWIDANNSEQSILSFVRSNKDGKEKLIFVCNFTPVTYYDYHIGVPDAGSYIEAFNSDDLEFGGSGQLIADEIFSTPESSHGFDQRITIKVPPMATLVLKLKK.

The Nucleophile role is filled by Asp318. Glu371 functions as the Proton donor in the catalytic mechanism.

It belongs to the glycosyl hydrolase 13 family. GlgB subfamily. As to quaternary structure, monomer.

It carries out the reaction Transfers a segment of a (1-&gt;4)-alpha-D-glucan chain to a primary hydroxy group in a similar glucan chain.. The protein operates within glycan biosynthesis; glycogen biosynthesis. Catalyzes the formation of the alpha-1,6-glucosidic linkages in glycogen by scission of a 1,4-alpha-linked oligosaccharide from growing alpha-1,4-glucan chains and the subsequent attachment of the oligosaccharide to the alpha-1,6 position. This is 1,4-alpha-glucan branching enzyme GlgB from Francisella philomiragia subsp. philomiragia (strain ATCC 25017 / CCUG 19701 / FSC 153 / O#319-036).